Reading from the N-terminus, the 88-residue chain is Defensin-like protein 98 (88 aa).

An N-terminal signal peptide occupies residues 1–29 (MGSLRVSTVVIAVVACLSILLISPTEVDG). Cystine bridges form between Cys-33-Cys-76, Cys-40-Cys-62, Cys-46-Cys-73, and Cys-50-Cys-75.

It belongs to the DEFL family.

The protein resides in the secreted. This chain is Defensin-like protein 98, found in Arabidopsis thaliana (Mouse-ear cress).